Consider the following 256-residue polypeptide: uncharacterized protein (256 aa).

Disordered stretches follow at residues 1 to 38 and 51 to 75; these read MGKT…PNRD and PRPS…RCPQ.

This is an uncharacterized protein from Homo sapiens (Human).